The sequence spans 635 residues: Threonine--tRNA ligase (635 aa).

Residues 1 to 61 (MIAITLPDGS…DRDVALAIIT (61 aa)) enclose the TGS domain. The catalytic stretch occupies residues 242-533 (DHRKLGKSLD…LLENHAGALP (292 aa)). The Zn(2+) site is built by Cys333, His384, and His510.

Belongs to the class-II aminoacyl-tRNA synthetase family. Homodimer. It depends on Zn(2+) as a cofactor.

It localises to the cytoplasm. It catalyses the reaction tRNA(Thr) + L-threonine + ATP = L-threonyl-tRNA(Thr) + AMP + diphosphate + H(+). In terms of biological role, catalyzes the attachment of threonine to tRNA(Thr) in a two-step reaction: L-threonine is first activated by ATP to form Thr-AMP and then transferred to the acceptor end of tRNA(Thr). Also edits incorrectly charged L-seryl-tRNA(Thr). This Cupriavidus pinatubonensis (strain JMP 134 / LMG 1197) (Cupriavidus necator (strain JMP 134)) protein is Threonine--tRNA ligase.